Reading from the N-terminus, the 1287-residue chain is DENN domain-containing protein 5A (1287 aa).

Positions 57–259 (STTEGENFEQ…EVPLPPPGRS (203 aa)) constitute a uDENN domain. Position 193 is a phosphoserine (Ser-193). Positions 278 to 414 (ELPLFDFPVK…LEFVQEVSEI (137 aa)) constitute a cDENN domain. Residues 416-598 (MAFGVPPEGN…IMCHDDDDKD (183 aa)) form the dDENN domain. The RUN 1 domain occupies 787–950 (VEENTLIASL…DYFCFTNVFT (164 aa)). Residues 954–1062 (IPYHILIVPS…DDGSLERVLV (109 aa)) form the PLAT domain. Position 1079 is a phosphothreonine (Thr-1079). A phosphoserine mark is found at Ser-1085, Ser-1087, and Ser-1096. Residues 1134–1280 (TLLLCGECGL…QEFNITLDTS (147 aa)) form the RUN 2 domain.

It belongs to the RAB6IP1 family. Interacts with RAB6A bound to GTP. In terms of tissue distribution, expressed in developing brain and developing neurons.

The protein resides in the golgi apparatus membrane. Its function is as follows. Guanine nucleotide exchange factor (GEF) which may activate RAB6A and RAB39A and/or RAB39B. Promotes the exchange of GDP to GTP, converting inactive GDP-bound Rab proteins into their active GTP-bound form. Involved in the negative regulation of neurite outgrowth. The sequence is that of DENN domain-containing protein 5A (Dennd5a) from Rattus norvegicus (Rat).